A 606-amino-acid chain; its full sequence is Preterminal protein (606 aa).

The Nuclear localization signal motif lies at 320 to 329 (RLPVRRRRRR). S515 carries the post-translational modification O-(5'-phospho-DNA)-serine. The tract at residues 573 to 606 (HLPLPERQADIPLPPLPAGPEPPLPPGARPRRRF) is disordered. The segment covering 584–600 (PLPPLPAGPEPPLPPGA) has biased composition (pro residues).

This sequence belongs to the adenoviridae terminal protein family. As to quaternary structure, heterodimer with the polymerase; this heterodimer binds to bp 9 to 18 of the genome. Interacts with host POU2F1; POU2F1 binds to the auxiliary sequences in the inverted terminal repeats and tethers the pTP-POL heterodimer to the origin DNA thereby participating in the assembly of the pre-initiation complex (POL-TP-DBP-NFIA-POU2F1). Preterminal protein is used to replicate viral genome, upon genomic encapsidation it is processed first into iTP and finally into TP by adenovirus protease.

The protein resides in the host nucleus matrix. In terms of biological role, protein covalently bound to the viral DNA that acts as a primer for viral genomic replication by DNA strand displacement. Assembles on the viral origin of replication in an initiation complex with viral polymerase, DBP, host NFIA and host POU2F1/OCT1. During initiation, the polymerase covalently couples the first dCTP with Ser-580 of pTP. The terminal protein stimulates the template activity over 20 fold compared to protein-free templates. Neo-synthesized viral genomes are linked to two preterminal proteins, one for each 5' end. These new genomes are encapsidated in the nucleus, and during capsid maturation by viral protease, preterminal protein is first cleaved into intermediary (iTP), then into mature TP. May play a role in host nuclear matrix localization of genomic DNA. The chain is Preterminal protein from Human adenovirus A serotype 12 (HAdV-12).